The following is a 503-amino-acid chain: Carboxyl-terminal PDZ ligand of neuronal nitric oxide synthase protein (503 aa).

Residues 26–191 (FQHGISFEAK…ESERNSDGSG (166 aa)) form the PID domain. Residues 170–212 (HTQQNADGQEDGESERNSDGSGDPGRQLTGAERVSTATAEETD) form a disordered region. Ser-183, Ser-187, Ser-190, and Ser-262 each carry phosphoserine. Positions 266–285 (LLPSSSSSKPPGLGTGTPLS) are disordered. Positions 319 to 360 (AAEAAARLEAQARVHQLLLQNKDMLQHISLLVKQVQELELKL) form a coiled coil. A phosphoserine mark is found at Ser-368, Ser-371, Ser-398, and Ser-414. Residues 491–503 (QELGDSLDDEIAV) form an interaction with NOS1 region. The PDZ-binding signature appears at 501–503 (IAV).

Interacts with the PDZ domain of NOS1 or the second PDZ domain of DLG4 through its C-terminus. Interacts with RASD1 and SYN1, SYN2 and SYN3 via its PID domain. Forms a ternary complex with NOS1 and RASD1. Forms a ternary complex with NOS1 and SYN1. In terms of tissue distribution, mainly expressed in brain. Highly expressed in accessory olfactory bulb, caudate-putamen, cerebellum, cerebral cortex, dentate gyrus of the hippocampus, islands of Calleja, olfactory bulb and supraoptic nucleus. Expressed in kidney glomeruli podocytes (at protein level).

Its subcellular location is the cell projection. The protein localises to the filopodium. The protein resides in the podosome. Functionally, adapter protein involved in neuronal nitric-oxide (NO) synthesis regulation via its association with nNOS/NOS1. The complex formed with NOS1 and synapsins is necessary for specific NO and synapsin functions at a presynaptic level. Mediates an indirect interaction between NOS1 and RASD1 leading to enhance the ability of NOS1 to activate RASD1. Competes with DLG4 for interaction with NOS1, possibly affecting NOS1 activity by regulating the interaction between NOS1 and DLG4. In kidney podocytes, plays a role in podosomes and filopodia formation through CDC42 activation. This chain is Carboxyl-terminal PDZ ligand of neuronal nitric oxide synthase protein, found in Rattus norvegicus (Rat).